We begin with the raw amino-acid sequence, 82 residues long: Cobrotoxin-b (82 aa).

A signal peptide spans 1 to 21 (MKTLLLTLLVVTIVCLDLGYT). 4 disulfides stabilise this stretch: cysteine 24–cysteine 44, cysteine 38–cysteine 61, cysteine 63–cysteine 74, and cysteine 75–cysteine 80.

The protein belongs to the three-finger toxin family. Short-chain subfamily. Type I alpha-neurotoxin sub-subfamily. In terms of tissue distribution, expressed by the venom gland.

It localises to the secreted. Binds to muscle nicotinic acetylcholine receptor (nAChR) and inhibit acetylcholine from binding to the receptor, thereby impairing neuromuscular transmission. Produces peripheral paralysis by blocking neuromuscular transmission at the postsynaptic site. Has a lower toxicity than cobrotoxin. This is Cobrotoxin-b from Naja atra (Chinese cobra).